A 774-amino-acid polypeptide reads, in one-letter code: Fatty acid oxidation complex subunit alpha (774 aa).

Disordered stretches follow at residues 1–31 and 617–641; these read MSKE…VGAS and YLYS…RNSF. The enoyl-CoA hydratase stretch occupies residues 1–224; sequence MSKENIVTRE…KMGLVDDVVP (224 aa). Composition is skewed to polar residues over residues 8-31 and 620-637; these read TREN…VGAS and SNPT…SPAK. Residues 340 to 774 are 3-hydroxyacyl-CoA dehydrogenase; it reads RAIHRVGVLG…NIDEVTDVAS (435 aa).

It in the N-terminal section; belongs to the enoyl-CoA hydratase/isomerase family. In the central section; belongs to the 3-hydroxyacyl-CoA dehydrogenase family. In terms of assembly, heterotetramer of two alpha chains (FadJ) and two beta chains (FadI).

The protein localises to the cytoplasm. The enzyme catalyses a (3S)-3-hydroxyacyl-CoA = a (2E)-enoyl-CoA + H2O. The catalysed reaction is a 4-saturated-(3S)-3-hydroxyacyl-CoA = a (3E)-enoyl-CoA + H2O. It catalyses the reaction a (3S)-3-hydroxyacyl-CoA + NAD(+) = a 3-oxoacyl-CoA + NADH + H(+). It carries out the reaction (3S)-3-hydroxybutanoyl-CoA = (3R)-3-hydroxybutanoyl-CoA. It functions in the pathway lipid metabolism; fatty acid beta-oxidation. Catalyzes the formation of a hydroxyacyl-CoA by addition of water on enoyl-CoA. Also exhibits 3-hydroxyacyl-CoA epimerase and 3-hydroxyacyl-CoA dehydrogenase activities. The polypeptide is Fatty acid oxidation complex subunit alpha (Yersinia pestis (strain Pestoides F)).